We begin with the raw amino-acid sequence, 95 residues long: Integration host factor subunit beta (95 aa).

Residues 56–76 (RAPRTGRNPKTGTSVELDGKY) form a disordered region.

This sequence belongs to the bacterial histone-like protein family. In terms of assembly, heterodimer of an alpha and a beta chain.

In terms of biological role, this protein is one of the two subunits of integration host factor, a specific DNA-binding protein that functions in genetic recombination as well as in transcriptional and translational control. This is Integration host factor subunit beta from Shewanella woodyi (strain ATCC 51908 / MS32).